We begin with the raw amino-acid sequence, 252 residues long: Triosephosphate isomerase (252 aa).

Residue 10–12 (NWK) participates in substrate binding. Histidine 96 acts as the Electrophile in catalysis. The Proton acceptor role is filled by glutamate 168. Substrate-binding positions include glycine 174, serine 214, and 235 to 236 (GG).

The protein belongs to the triosephosphate isomerase family. Homodimer.

The protein resides in the cytoplasm. It carries out the reaction D-glyceraldehyde 3-phosphate = dihydroxyacetone phosphate. It participates in carbohydrate biosynthesis; gluconeogenesis. It functions in the pathway carbohydrate degradation; glycolysis; D-glyceraldehyde 3-phosphate from glycerone phosphate: step 1/1. In terms of biological role, involved in the gluconeogenesis. Catalyzes stereospecifically the conversion of dihydroxyacetone phosphate (DHAP) to D-glyceraldehyde-3-phosphate (G3P). The protein is Triosephosphate isomerase of Streptococcus pyogenes serotype M2 (strain MGAS10270).